The sequence spans 356 residues: Tungsten-containing aldehyde ferredoxin oxidoreductase cofactor-modifying protein (356 aa).

The Radical SAM core domain occupies 1-214; that stretch reads MKYLYLEITS…PIVNELYKIA (214 aa). C12, C16, and C19 together coordinate [4Fe-4S] cluster.

This sequence belongs to the radical SAM superfamily. The cofactor is [4Fe-4S] cluster.

Involved in the biosynthesis of a molybdopterin-based tungsten cofactor. This is Tungsten-containing aldehyde ferredoxin oxidoreductase cofactor-modifying protein (cmo) from Pyrococcus furiosus (strain ATCC 43587 / DSM 3638 / JCM 8422 / Vc1).